The chain runs to 305 residues: Phosphoribosylaminoimidazole-succinocarboxamide synthase (305 aa).

Belongs to the SAICAR synthetase family.

The catalysed reaction is 5-amino-1-(5-phospho-D-ribosyl)imidazole-4-carboxylate + L-aspartate + ATP = (2S)-2-[5-amino-1-(5-phospho-beta-D-ribosyl)imidazole-4-carboxamido]succinate + ADP + phosphate + 2 H(+). It participates in purine metabolism; IMP biosynthesis via de novo pathway; 5-amino-1-(5-phospho-D-ribosyl)imidazole-4-carboxamide from 5-amino-1-(5-phospho-D-ribosyl)imidazole-4-carboxylate: step 1/2. The chain is Phosphoribosylaminoimidazole-succinocarboxamide synthase from Polaromonas naphthalenivorans (strain CJ2).